A 293-amino-acid polypeptide reads, in one-letter code: Acetylglutamate kinase (293 aa).

Residues 67 to 68 (GG), Arg89, and Asn190 each bind substrate.

Belongs to the acetylglutamate kinase family. ArgB subfamily.

It localises to the cytoplasm. It carries out the reaction N-acetyl-L-glutamate + ATP = N-acetyl-L-glutamyl 5-phosphate + ADP. Its pathway is amino-acid biosynthesis; L-arginine biosynthesis; N(2)-acetyl-L-ornithine from L-glutamate: step 2/4. Catalyzes the ATP-dependent phosphorylation of N-acetyl-L-glutamate. The protein is Acetylglutamate kinase of Nitrosospira multiformis (strain ATCC 25196 / NCIMB 11849 / C 71).